The following is a 162-amino-acid chain: Urease subunit beta (162 aa).

Positions 116 to 162 (WRRSSAAGDAPQELPQVEAAERGRKLDDATDVDTNVGTEEGFEEGRN) are disordered. The segment covering 134–143 (AAERGRKLDD) has biased composition (basic and acidic residues).

It belongs to the urease beta subunit family. In terms of assembly, heterotrimer of UreA (gamma), UreB (beta) and UreC (alpha) subunits. Three heterotrimers associate to form the active enzyme.

It is found in the cytoplasm. It carries out the reaction urea + 2 H2O + H(+) = hydrogencarbonate + 2 NH4(+). Its pathway is nitrogen metabolism; urea degradation; CO(2) and NH(3) from urea (urease route): step 1/1. In Corynebacterium glutamicum (strain ATCC 13032 / DSM 20300 / JCM 1318 / BCRC 11384 / CCUG 27702 / LMG 3730 / NBRC 12168 / NCIMB 10025 / NRRL B-2784 / 534), this protein is Urease subunit beta.